We begin with the raw amino-acid sequence, 120 residues long: Membrane-anchored ubiquitin-fold protein 5 (120 aa).

The Ubiquitin-like domain occupies 7-72 (IELKFRLADG…ILENNKTLSE (66 aa)). Cys-115 carries S-palmitoyl cysteine lipidation. At Cys-117 the chain carries Cysteine methyl ester. The S-geranylgeranyl cysteine moiety is linked to residue Cys-117. Positions 118-120 (CIL) are cleaved as a propeptide — removed in mature form.

As to expression, ubiquitous.

It localises to the cell membrane. In terms of biological role, may serve as docking site to facilitate the association of other proteins to the plasma membrane. This Arabidopsis thaliana (Mouse-ear cress) protein is Membrane-anchored ubiquitin-fold protein 5 (MUB5).